Consider the following 126-residue polypeptide: Glycine cleavage system H protein (126 aa).

Residues 21-103 (TVTIGISEHA…YEGGWIVKVK (83 aa)) form the Lipoyl-binding domain. K62 carries the post-translational modification N6-lipoyllysine.

It belongs to the GcvH family. The glycine cleavage system is composed of four proteins: P, T, L and H. It depends on (R)-lipoate as a cofactor.

In terms of biological role, the glycine cleavage system catalyzes the degradation of glycine. The H protein shuttles the methylamine group of glycine from the P protein to the T protein. This is Glycine cleavage system H protein from Vibrio vulnificus (strain CMCP6).